A 324-amino-acid chain; its full sequence is Lactonase drp35 (324 aa).

Ca(2+) is bound by residues glutamate 47, serine 109, glycine 111, aspartate 129, threonine 132, tyrosine 134, aspartate 137, asparagine 184, aspartate 235, and serine 236. The active-site Proton donor is aspartate 235.

Belongs to the SMP-30/CGR1 family. Ca(2+) serves as cofactor.

The protein resides in the cytoplasm. Its function is as follows. Exhibits lactonase activity. Acts in cells with perturbed membrane integrity and is possibly related to the membrane homeostasis. The chain is Lactonase drp35 (drp35) from Staphylococcus aureus (strain bovine RF122 / ET3-1).